Here is a 244-residue protein sequence, read N- to C-terminus: Mast cell protease 2 (244 aa).

An N-terminal signal peptide occupies residues 1-18; that stretch reads MQALLFLMALLLPSGAGA. Residues 19–20 constitute a propeptide, activation peptide; it reads EE. In terms of domain architecture, Peptidase S1 spans 21 to 242; the sequence is IIGGVEAKPH…YLPWIYKVLK (222 aa). The N-linked (GlcNAc...) asparagine glycan is linked to asparagine 44. The cysteines at positions 50 and 66 are disulfide-linked. Active-site charge relay system residues include histidine 65 and aspartate 109. 2 disulfide bridges follow: cysteine 143–cysteine 208 and cysteine 174–cysteine 187. Serine 202 acts as the Charge relay system in catalysis.

Belongs to the peptidase S1 family. Granzyme subfamily. In terms of tissue distribution, mucosal mast cells.

In Mus musculus (Mouse), this protein is Mast cell protease 2 (Mcpt2).